Here is a 298-residue protein sequence, read N- to C-terminus: MAHPEQQYLDLLAQTLERGDRRVDRTGVGTLSLFGAMLRFDLSDGQVPILTTKRVYWKTAVKEMLWFLTGGTNIRPLLQENVRIWSDWPLAAYRRESGEEISQAAFEQRILEDEAFAARWGELGPVYGRQWRRWLGPDGREHDQIAALIETLRTNPSSRRMLFHAWNVAEVGQMALPPCHMVYQYHVTSDGRLNALLYQRSVDLLLGAPFNFVGAAALQLMIAQQAGLVPGDLVWVGGDTHLYLNHLDQAREQTGRAPRDWPRMRLLRQADGIDDYRIEDFAVEGYDPHPAIAAEVAV.

DUMP is bound by residues Arg-25 and 159 to 160; that span reads RR. The active-site Nucleophile is Cys-179. DUMP is bound by residues 200 to 203, Asn-211, and 241 to 243; these read RSVD and HLY. A (6R)-5,10-methylene-5,6,7,8-tetrahydrofolate-binding site is contributed by Asp-203. Ala-297 lines the (6R)-5,10-methylene-5,6,7,8-tetrahydrofolate pocket.

It belongs to the thymidylate synthase family. Bacterial-type ThyA subfamily. Homodimer.

The protein resides in the cytoplasm. It catalyses the reaction dUMP + (6R)-5,10-methylene-5,6,7,8-tetrahydrofolate = 7,8-dihydrofolate + dTMP. It functions in the pathway pyrimidine metabolism; dTTP biosynthesis. Catalyzes the reductive methylation of 2'-deoxyuridine-5'-monophosphate (dUMP) to 2'-deoxythymidine-5'-monophosphate (dTMP) while utilizing 5,10-methylenetetrahydrofolate (mTHF) as the methyl donor and reductant in the reaction, yielding dihydrofolate (DHF) as a by-product. This enzymatic reaction provides an intracellular de novo source of dTMP, an essential precursor for DNA biosynthesis. In Cereibacter sphaeroides (strain ATCC 17029 / ATH 2.4.9) (Rhodobacter sphaeroides), this protein is Thymidylate synthase.